A 270-amino-acid polypeptide reads, in one-letter code: Interleukin-1 alpha (270 aa).

A propeptide spanning residues 1-112 is cleaved from the precursor; the sequence is MAKVPDLFED…DTEEEIIKPR (112 aa). Lysine 82 carries the N6-acetyllysine modification. The interval 82-86 is nuclear localization signal (NLS); sequence KKRRL. Phosphoserine is present on serine 87. N-linked (GlcNAc...) asparagine glycans are attached at residues asparagine 102 and asparagine 141.

Belongs to the IL-1 family. As to quaternary structure, monomer. Interacts with TMED10; the interaction mediates the translocation from the cytoplasm into the ERGIC (endoplasmic reticulum-Golgi intermediate compartment) and thereby secretion. Interacts with IL1R1. Interacts with S100A13; this interaction is the first step in the export of IL1A, followed by direct translocation of this complex across the plasma membrane. Acetylated within its nuclear localization sequence, which impacts subcellular localization. Post-translationally, proteolytic processed by CAPN1 in a calcium-dependent manner. Cleavage from 31 kDa precursor to 18 kDa biologically active molecules. In terms of processing, phosphorylated. Phosphorylation greatly enhances susceptibility to digestion and promotes the conversion of pre-IL1A alpha to the biologically active IL1A.

It localises to the nucleus. The protein localises to the cytoplasm. The protein resides in the secreted. Cytokine constitutively present intracellularly in nearly all resting non-hematopoietic cells that plays an important role in inflammation and bridges the innate and adaptive immune systems. After binding to its receptor IL1R1 together with its accessory protein IL1RAP, forms the high affinity interleukin-1 receptor complex. Signaling involves the recruitment of adapter molecules such as MYD88, IRAK1 or IRAK4. In turn, mediates the activation of NF-kappa-B and the three MAPK pathways p38, p42/p44 and JNK pathways. Within the cell, acts as an alarmin and cell death results in its liberation in the extracellular space after disruption of the cell membrane to induce inflammation and alert the host to injury or damage. In addition to its role as a danger signal, which occurs when the cytokine is passively released by cell necrosis, directly senses DNA damage and acts as signal for genotoxic stress without loss of cell integrity. The polypeptide is Interleukin-1 alpha (IL1A) (Sus scrofa (Pig)).